The following is a 131-amino-acid chain: uncharacterized protein (131 aa).

The next 2 membrane-spanning stretches (helical) occupy residues 68-88 (VVRA…VAPI) and 94-114 (VLGA…IVAI).

The protein localises to the cell membrane. This is an uncharacterized protein from Methanocaldococcus jannaschii (strain ATCC 43067 / DSM 2661 / JAL-1 / JCM 10045 / NBRC 100440) (Methanococcus jannaschii).